The following is a 183-amino-acid chain: NAD(P)H-quinone oxidoreductase subunit I, chloroplastic (183 aa).

2 consecutive 4Fe-4S ferredoxin-type domains span residues 55-84 (GRIH…VDWK) and 95-124 (KSYS…MTEE). Cysteine 64, cysteine 67, cysteine 70, cysteine 74, cysteine 104, cysteine 107, cysteine 110, and cysteine 114 together coordinate [4Fe-4S] cluster.

This sequence belongs to the complex I 23 kDa subunit family. In terms of assembly, NDH is composed of at least 16 different subunits, 5 of which are encoded in the nucleus. Requires [4Fe-4S] cluster as cofactor.

The protein localises to the plastid. The protein resides in the chloroplast thylakoid membrane. It carries out the reaction a plastoquinone + NADH + (n+1) H(+)(in) = a plastoquinol + NAD(+) + n H(+)(out). The catalysed reaction is a plastoquinone + NADPH + (n+1) H(+)(in) = a plastoquinol + NADP(+) + n H(+)(out). Functionally, NDH shuttles electrons from NAD(P)H:plastoquinone, via FMN and iron-sulfur (Fe-S) centers, to quinones in the photosynthetic chain and possibly in a chloroplast respiratory chain. The immediate electron acceptor for the enzyme in this species is believed to be plastoquinone. Couples the redox reaction to proton translocation, and thus conserves the redox energy in a proton gradient. This is NAD(P)H-quinone oxidoreductase subunit I, chloroplastic from Anthoceros angustus (Hornwort).